A 300-amino-acid polypeptide reads, in one-letter code: Ribosomal protein bS6--L-glutamate ligase (300 aa).

Positions 104 to 287 (MQLLARQGID…IAGKMIRWIE (184 aa)) constitute an ATP-grasp domain. Residues K141, 178–179 (EY), D187, and 211–213 (RSN) contribute to the ATP site. Residues D248, E260, and N262 each coordinate Mg(2+). Mn(2+)-binding residues include D248, E260, and N262.

Belongs to the RimK family. The cofactor is Mg(2+). Mn(2+) serves as cofactor.

Functionally, an L-glutamate ligase that catalyzes the ATP-dependent post-translational addition of glutamate residues to the C-terminus of ribosomal protein bS6 (RpsF). Is also able to catalyze the synthesis of poly-alpha-glutamate in vitro, via ATP hydrolysis from unprotected glutamate as substrate. The number of glutamate residues added to either RpsF or to poly-alpha-glutamate changes with pH. The polypeptide is Ribosomal protein bS6--L-glutamate ligase (Escherichia coli O7:K1 (strain IAI39 / ExPEC)).